The chain runs to 283 residues: uncharacterized protein (283 aa).

This is an uncharacterized protein from Acanthamoeba polyphaga mimivirus (APMV).